Here is an 86-residue protein sequence, read N- to C-terminus: Large ribosomal subunit protein bL27 (86 aa).

This sequence belongs to the bacterial ribosomal protein bL27 family.

The polypeptide is Large ribosomal subunit protein bL27 (Xanthomonas axonopodis pv. citri (strain 306)).